The following is a 654-amino-acid chain: MLGFRSPIRLCKLSALGSAPLLPISRPKLFSTAVARYAADMETVNTTERLARLRQLMQEHKVDVYIVPSEDSHQSEYIAPCDGRREFISGFSGSAGTAIVSMTKAALSTDGRYFNQASKQLDSNWELLKRGVENVPTWQEWTTEQAEGGKVVGVDPSLITASGARSLEETLKRNGSSLVGISQNLVDLVWGKDRPAPPREKVRVHPDKFAGKTFQEKIADLRKELEKKKTAGFVISMLDEIAWLFNLRGSDIPYNPVFFAYAIITPTKAELYIDDDKITPEVVAHLGQDVVIKPYNSIFADAKALSEARKQEAGETASKFLLSNKASWALSLSLGGEEHVEETRSPIADAKAIKNEVELAGMRACHIRDGAALIEYFAWLENELVNKKTVLDEVDAADKLERIRTKHDLFAGLSFDTISSTGPNGAVIHYKPEKGTCSIIDPDAIYLCDSGAQYLDGTTDVTRTFHFGKPTELEKKAFTLVLKGLIAIDTAVFPKGTSGFALDALARQYLWKEGLDYLHGTGHGIGSYLNVHEGPIGIGTRVQYTEVPIAPGNVISDEPGFYEDGKFGIRIENVIMAREVQTTHKFGDKPWLGFEHVTMAPIGRNLIQPSLLSDLELKWVNDYHAEVWDKTHHFFENDEFTRSWLQRETAPITK.

Mn(2+) is bound by residues D449, D460, E558, and E572.

Belongs to the peptidase M24B family. Mn(2+) is required as a cofactor.

The enzyme catalyses Release of any N-terminal amino acid, including proline, that is linked to proline, even from a dipeptide or tripeptide.. In terms of biological role, catalyzes the removal of a penultimate prolyl residue from the N-termini of peptides. The protein is Probable Xaa-Pro aminopeptidase P (ampp) of Neosartorya fischeri (strain ATCC 1020 / DSM 3700 / CBS 544.65 / FGSC A1164 / JCM 1740 / NRRL 181 / WB 181) (Aspergillus fischerianus).